Reading from the N-terminus, the 320-residue chain is Aspartate carbamoyltransferase catalytic subunit (320 aa).

Positions 68 and 69 each coordinate carbamoyl phosphate. Lys-96 is a binding site for L-aspartate. Positions 118, 148, and 151 each coordinate carbamoyl phosphate. Residues Arg-181 and Arg-236 each contribute to the L-aspartate site. The carbamoyl phosphate site is built by Gly-277 and Pro-278.

Belongs to the aspartate/ornithine carbamoyltransferase superfamily. ATCase family. As to quaternary structure, heterododecamer (2C3:3R2) of six catalytic PyrB chains organized as two trimers (C3), and six regulatory PyrI chains organized as three dimers (R2).

The enzyme catalyses carbamoyl phosphate + L-aspartate = N-carbamoyl-L-aspartate + phosphate + H(+). The protein operates within pyrimidine metabolism; UMP biosynthesis via de novo pathway; (S)-dihydroorotate from bicarbonate: step 2/3. Functionally, catalyzes the condensation of carbamoyl phosphate and aspartate to form carbamoyl aspartate and inorganic phosphate, the committed step in the de novo pyrimidine nucleotide biosynthesis pathway. The protein is Aspartate carbamoyltransferase catalytic subunit of Variovorax paradoxus (strain S110).